Here is a 349-residue protein sequence, read N- to C-terminus: Hydroxymethylglutaryl-CoA synthase (349 aa).

The (3S)-3-hydroxy-3-methylglutaryl-CoA site is built by Asp-30 and Ala-31. Residue Glu-82 is the Proton donor/acceptor of the active site. The (3S)-3-hydroxy-3-methylglutaryl-CoA site is built by Cys-114 and Thr-155. Residue Cys-114 is the Acyl-thioester intermediate of the active site. Arg-203 serves as a coordination point for CoA. Residues Thr-205 and His-238 each coordinate (3S)-3-hydroxy-3-methylglutaryl-CoA. His-238 (proton donor/acceptor) is an active-site residue. Residue Lys-243 coordinates CoA. Residues Asn-270 and Ser-300 each coordinate (3S)-3-hydroxy-3-methylglutaryl-CoA.

Belongs to the thiolase-like superfamily. Archaeal HMG-CoA synthase family. In terms of assembly, interacts with acetoacetyl-CoA thiolase that catalyzes the precedent step in the pathway and with a DUF35 protein. The acetoacetyl-CoA thiolase/HMG-CoA synthase complex channels the intermediate via a fused CoA-binding site, which allows for efficient coupling of the endergonic thiolase reaction with the exergonic HMGCS reaction.

The catalysed reaction is acetoacetyl-CoA + acetyl-CoA + H2O = (3S)-3-hydroxy-3-methylglutaryl-CoA + CoA + H(+). The protein operates within metabolic intermediate biosynthesis; (R)-mevalonate biosynthesis; (R)-mevalonate from acetyl-CoA: step 2/3. Functionally, catalyzes the condensation of acetyl-CoA with acetoacetyl-CoA to form 3-hydroxy-3-methylglutaryl-CoA (HMG-CoA). Functions in the mevalonate (MVA) pathway leading to isopentenyl diphosphate (IPP), a key precursor for the biosynthesis of isoprenoid compounds that are building blocks of archaeal membrane lipids. This chain is Hydroxymethylglutaryl-CoA synthase, found in Methanococcus maripaludis (strain C7 / ATCC BAA-1331).